The following is a 100-amino-acid chain: Large ribosomal subunit protein uL23 (100 aa).

This sequence belongs to the universal ribosomal protein uL23 family. In terms of assembly, part of the 50S ribosomal subunit. Contacts protein L29, and trigger factor when it is bound to the ribosome.

In terms of biological role, one of the early assembly proteins it binds 23S rRNA. One of the proteins that surrounds the polypeptide exit tunnel on the outside of the ribosome. Forms the main docking site for trigger factor binding to the ribosome. The polypeptide is Large ribosomal subunit protein uL23 (Pseudothermotoga lettingae (strain ATCC BAA-301 / DSM 14385 / NBRC 107922 / TMO) (Thermotoga lettingae)).